Here is a 298-residue protein sequence, read N- to C-terminus: 4-hydroxy-tetrahydrodipicolinate synthase (298 aa).

T51 lines the pyruvate pocket. Y139 serves as the catalytic Proton donor/acceptor. Catalysis depends on K167, which acts as the Schiff-base intermediate with substrate. A pyruvate-binding site is contributed by I209.

This sequence belongs to the DapA family. As to quaternary structure, homotetramer; dimer of dimers.

It is found in the cytoplasm. It catalyses the reaction L-aspartate 4-semialdehyde + pyruvate = (2S,4S)-4-hydroxy-2,3,4,5-tetrahydrodipicolinate + H2O + H(+). Its pathway is amino-acid biosynthesis; L-lysine biosynthesis via DAP pathway; (S)-tetrahydrodipicolinate from L-aspartate: step 3/4. Catalyzes the condensation of (S)-aspartate-beta-semialdehyde [(S)-ASA] and pyruvate to 4-hydroxy-tetrahydrodipicolinate (HTPA). This Histophilus somni (strain 2336) (Haemophilus somnus) protein is 4-hydroxy-tetrahydrodipicolinate synthase.